A 152-amino-acid polypeptide reads, in one-letter code: MEIDKVFCDTIMYQDLEILQDYLDTFKLDPQLTLILKKYKHASPFWKSDEKSFWIFEGILHDEAERVKQLNGVKTRNKVGFIYIKQIFYDIVELLLEATNDKKASSIDSRCVVCYENEICIKIQPCNHFVVCKSCFNRLNTCPMCRSKINKS.

The RING-type zinc-finger motif lies at Cys111–Arg146.

The protein belongs to the IIV-6 157L family.

This chain is Putative RING finger protein 157L, found in Invertebrate iridescent virus 6 (IIV-6).